A 177-amino-acid polypeptide reads, in one-letter code: Large ribosomal subunit protein uL6 (177 aa).

Belongs to the universal ribosomal protein uL6 family. Part of the 50S ribosomal subunit.

Functionally, this protein binds to the 23S rRNA, and is important in its secondary structure. It is located near the subunit interface in the base of the L7/L12 stalk, and near the tRNA binding site of the peptidyltransferase center. This Paracoccus denitrificans (strain Pd 1222) protein is Large ribosomal subunit protein uL6.